We begin with the raw amino-acid sequence, 353 residues long: Serine proteinase inhibitor 1 (353 aa).

This sequence belongs to the serpin family. Poxviruses subfamily.

Its subcellular location is the host cytoplasm. In terms of biological role, plays a role in mediating viral host range. May act to inhibit a caspase independent form of apoptosis to allow efficient virus replication in infected cells. This Vaccinia virus (strain Western Reserve) (VACV) protein is Serine proteinase inhibitor 1 (OPG208).